A 351-amino-acid chain; its full sequence is Phosphoribosylformylglycinamidine cyclo-ligase (351 aa).

This sequence belongs to the AIR synthase family.

It is found in the cytoplasm. It carries out the reaction 2-formamido-N(1)-(5-O-phospho-beta-D-ribosyl)acetamidine + ATP = 5-amino-1-(5-phospho-beta-D-ribosyl)imidazole + ADP + phosphate + H(+). Its pathway is purine metabolism; IMP biosynthesis via de novo pathway; 5-amino-1-(5-phospho-D-ribosyl)imidazole from N(2)-formyl-N(1)-(5-phospho-D-ribosyl)glycinamide: step 2/2. The chain is Phosphoribosylformylglycinamidine cyclo-ligase from Idiomarina loihiensis (strain ATCC BAA-735 / DSM 15497 / L2-TR).